Reading from the N-terminus, the 356-residue chain is S-adenosylmethionine:tRNA ribosyltransferase-isomerase (356 aa).

It belongs to the QueA family. Monomer.

Its subcellular location is the cytoplasm. It catalyses the reaction 7-aminomethyl-7-carbaguanosine(34) in tRNA + S-adenosyl-L-methionine = epoxyqueuosine(34) in tRNA + adenine + L-methionine + 2 H(+). The protein operates within tRNA modification; tRNA-queuosine biosynthesis. Transfers and isomerizes the ribose moiety from AdoMet to the 7-aminomethyl group of 7-deazaguanine (preQ1-tRNA) to give epoxyqueuosine (oQ-tRNA). This is S-adenosylmethionine:tRNA ribosyltransferase-isomerase from Escherichia coli (strain UTI89 / UPEC).